We begin with the raw amino-acid sequence, 166 residues long: Putative lipoprotein Lxx21020 (166 aa).

A signal peptide spans 1 to 22; sequence MTKTTRLLRATTVAAILLGLTG. The N-palmitoyl cysteine moiety is linked to residue C23. C23 carries the S-diacylglycerol cysteine lipid modification.

The protein localises to the cell membrane. The protein is Putative lipoprotein Lxx21020 of Leifsonia xyli subsp. xyli (strain CTCB07).